The chain runs to 140 residues: MIDILKIKEALPHLYPMLLVDRVLEVSEDEIVALKNVTINEPFFNGHFPDYPVMPGVLIMEALAQTAGVLELSKEENKGKLVFYAGMDKVKFKKQVVPGDQLIMTAKFVKRRGTIAVVEAKAEVEGKLAASGTLTFAIGK.

Residue His47 is part of the active site.

This sequence belongs to the thioester dehydratase family. FabZ subfamily.

Its subcellular location is the cytoplasm. It catalyses the reaction a (3R)-hydroxyacyl-[ACP] = a (2E)-enoyl-[ACP] + H2O. Involved in unsaturated fatty acids biosynthesis. Catalyzes the dehydration of short chain beta-hydroxyacyl-ACPs and long chain saturated and unsaturated beta-hydroxyacyl-ACPs. In Streptococcus suis (strain 98HAH33), this protein is 3-hydroxyacyl-[acyl-carrier-protein] dehydratase FabZ.